Consider the following 88-residue polypeptide: Small ribosomal subunit protein uS15 (88 aa).

This sequence belongs to the universal ribosomal protein uS15 family. In terms of assembly, part of the 30S ribosomal subunit. Forms a bridge to the 50S subunit in the 70S ribosome, contacting the 23S rRNA.

In terms of biological role, one of the primary rRNA binding proteins, it binds directly to 16S rRNA where it helps nucleate assembly of the platform of the 30S subunit by binding and bridging several RNA helices of the 16S rRNA. Its function is as follows. Forms an intersubunit bridge (bridge B4) with the 23S rRNA of the 50S subunit in the ribosome. This Mycoplasmopsis pulmonis (strain UAB CTIP) (Mycoplasma pulmonis) protein is Small ribosomal subunit protein uS15.